A 531-amino-acid polypeptide reads, in one-letter code: T-complex protein 1 subunit zeta (531 aa).

The residue at position 2 (Ala2) is an N-acetylalanine. Lys5 bears the N6-acetyllysine mark. Residue Gly39 coordinates ADP. Gly39 serves as a coordination point for ATP. Asp90 lines the Mg(2+) pocket. Residues Gly91, Thr92, Thr93, Ser94, Thr158, and Lys159 each coordinate ADP. Positions 91, 92, and 93 each coordinate ATP. Lys199 carries the N6-acetyllysine modification. Ser205 is subject to Phosphoserine. Lys251 is covalently cross-linked (Glycyl lysine isopeptide (Lys-Gly) (interchain with G-Cter in SUMO2)). An N6-acetyllysine mark is found at Lys287, Lys365, Lys377, and Lys388. An ADP-binding site is contributed by Ala411. The ATP site is built by Ala411, Gly412, Asp496, and Lys501. An ADP-binding site is contributed by Asp496.

It belongs to the TCP-1 chaperonin family. In terms of assembly, component of the chaperonin-containing T-complex (TRiC), a hexadecamer composed of two identical back-to-back stacked rings enclosing a protein folding chamber. Each ring is made up of eight different subunits: TCP1/CCT1, CCT2, CCT3, CCT4, CCT5, CCT6A/CCT6, CCT7, CCT8. Interacts with PACRG.

The protein localises to the cytoplasm. It carries out the reaction ATP + H2O = ADP + phosphate + H(+). Its function is as follows. Component of the chaperonin-containing T-complex (TRiC), a molecular chaperone complex that assists the folding of actin, tubulin and other proteins upon ATP hydrolysis. The TRiC complex mediates the folding of WRAP53/TCAB1, thereby regulating telomere maintenance. The sequence is that of T-complex protein 1 subunit zeta (CCT6) from Pongo abelii (Sumatran orangutan).